We begin with the raw amino-acid sequence, 279 residues long: 4-diphosphocytidyl-2-C-methyl-D-erythritol kinase (279 aa).

Residue lysine 11 is part of the active site. ATP is bound at residue 95–105 (PVAAGLGGGSS). Aspartate 137 is an active-site residue.

It belongs to the GHMP kinase family. IspE subfamily.

It carries out the reaction 4-CDP-2-C-methyl-D-erythritol + ATP = 4-CDP-2-C-methyl-D-erythritol 2-phosphate + ADP + H(+). Its pathway is isoprenoid biosynthesis; isopentenyl diphosphate biosynthesis via DXP pathway; isopentenyl diphosphate from 1-deoxy-D-xylulose 5-phosphate: step 3/6. Its function is as follows. Catalyzes the phosphorylation of the position 2 hydroxy group of 4-diphosphocytidyl-2C-methyl-D-erythritol. The chain is 4-diphosphocytidyl-2-C-methyl-D-erythritol kinase from Geobacter sulfurreducens (strain ATCC 51573 / DSM 12127 / PCA).